Reading from the N-terminus, the 491-residue chain is MGILWDSFLLLLVSTFALFLVRILLFKTGLIYMVKLWRRKIIDWFHVYQFYKVPEFNDNVQENHLYQKVYMYLNSLSSIENSDFTNLFTGKKSNEIILRLDRNQVVGDEFLGARVCWINGEDEDGARNFVLKIRKADKRRILGSYLQHIHTVSDELEQRNTELKLFINVGIDDHLNKKKKKNGRWRSIPFDHPCTFDNIAMETDLKNKVKSDLESFLKGKQYYNRLGRVWKRSYLLYGPSGTGKSSFVAAMANFLDYDVYDIDLSKVVDDSDLKMLLLQTRGKSVIVIEDLDRHLSTKSTAVNLSGILNFTDSILSSCTADERIMVFTMTGKEQIDPAMLRPGRVDVHIHFPLCDFTAFKTLANNYLGVKEHKLFSQVEGIFQNGASLSPAEIGELMIANRNSPTRALKHVINALQTDGDRRGTGRRLLLENGSRKSTSEDVSDDMSGSLCGGGGGSSPAVKEFRKLYGLLRIKSSRKSGSFDVAREMRDG.

A helical transmembrane segment spans residues 1-21; that stretch reads MGILWDSFLLLLVSTFALFLV. 238-245 is an ATP binding site; it reads GPSGTGKS. The segment at 423-460 is disordered; sequence GTGRRLLLENGSRKSTSEDVSDDMSGSLCGGGGGSSPA.

Belongs to the AAA ATPase family. BCS1 subfamily. The cofactor is Mg(2+).

Its subcellular location is the membrane. It carries out the reaction ATP + H2O = ADP + phosphate + H(+). The sequence is that of AAA-ATPase At2g46620 from Arabidopsis thaliana (Mouse-ear cress).